A 254-amino-acid chain; its full sequence is UPF0246 protein FTM_0239 (254 aa).

It belongs to the UPF0246 family.

This is UPF0246 protein FTM_0239 from Francisella tularensis subsp. mediasiatica (strain FSC147).